The primary structure comprises 77 residues: Small ribosomal subunit protein bS20 (77 aa).

It belongs to the bacterial ribosomal protein bS20 family.

Binds directly to 16S ribosomal RNA. The protein is Small ribosomal subunit protein bS20 of Lactococcus lactis subsp. cremoris (strain MG1363).